Here is a 257-residue protein sequence, read N- to C-terminus: MSFEINWEKLSSDSDLTSNIREGLNGYFQELELPSYVRAIELVDFGFGKIAPNITLREISSPLQDFYDAVNEEYEEDNETSSEMHGRDGQNVGESGEEAVVEKKETDTQFLIEFEYKGDMSLTLTAELVLNYPVERFMTLPLKISISNIGLHSLCLVSYLAKQVFISMLCDVSDPVLDDVDCVLDPNGPVLLANKPLERISIIRSMKIETEIGDRFKDDGSTLRSVGQLEEFIVQKLKDFLRKELAWPSWVNLDFND.

The SMP-LTD domain occupies 1–256 (MSFEINWEKL…WPSWVNLDFN (256 aa)). The interval 74-98 (YEEDNETSSEMHGRDGQNVGESGEE) is disordered.

This sequence belongs to the MDM12 family. In terms of assembly, component of the ER-mitochondria encounter structure (ERMES) or MDM complex, composed of MMM1, MDM10, MDM12 and MDM34. An MMM1 homodimer associates with one molecule of MDM12 on each side in a pairwise head-to-tail manner, and the SMP-LTD domains of MMM1 and MDM12 generate a continuous hydrophobic tunnel for phospholipid trafficking.

The protein localises to the mitochondrion outer membrane. It is found in the endoplasmic reticulum membrane. Component of the ERMES/MDM complex, which serves as a molecular tether to connect the endoplasmic reticulum (ER) and mitochondria. Components of this complex are involved in the control of mitochondrial shape and protein biogenesis, and function in nonvesicular lipid trafficking between the ER and mitochondria. MDM12 is required for the interaction of the ER-resident membrane protein MMM1 and the outer mitochondrial membrane-resident beta-barrel protein MDM10. The MDM12-MMM1 subcomplex functions in the major beta-barrel assembly pathway that is responsible for biogenesis of all mitochondrial outer membrane beta-barrel proteins, and acts in a late step after the SAM complex. The MDM10-MDM12-MMM1 subcomplex further acts in the TOM40-specific pathway after the action of the MDM12-MMM1 complex. Essential for establishing and maintaining the structure of mitochondria and maintenance of mtDNA nucleoids. This chain is Mitochondrial distribution and morphology protein 12, found in Candida glabrata (strain ATCC 2001 / BCRC 20586 / JCM 3761 / NBRC 0622 / NRRL Y-65 / CBS 138) (Yeast).